Reading from the N-terminus, the 135-residue chain is ATP synthase epsilon chain (135 aa).

Belongs to the ATPase epsilon chain family. F-type ATPases have 2 components, CF(1) - the catalytic core - and CF(0) - the membrane proton channel. CF(1) has five subunits: alpha(3), beta(3), gamma(1), delta(1), epsilon(1). CF(0) has three main subunits: a, b and c.

Its subcellular location is the cell inner membrane. In terms of biological role, produces ATP from ADP in the presence of a proton gradient across the membrane. The protein is ATP synthase epsilon chain of Brucella anthropi (strain ATCC 49188 / DSM 6882 / CCUG 24695 / JCM 21032 / LMG 3331 / NBRC 15819 / NCTC 12168 / Alc 37) (Ochrobactrum anthropi).